The chain runs to 190 residues: MPRLILASTSVYRRALLGRLQLDFDTVRPEVDEQARPGESPSALASRLAVEKAATVAARFPDAWVIGSDQVADLDGQALGKPGTHERARMQLTAMSGQTVRFHTAVSLVGPERQLHALDLTEVQLRALTVVEIERYLDAEPALDCAGSFKCEGLGISLFDAIRSEDPTALVGLPMIALARLLRQAGFQIP.

The Proton acceptor role is filled by Asp69.

Belongs to the Maf family. YceF subfamily. A divalent metal cation serves as cofactor.

Its subcellular location is the cytoplasm. The enzyme catalyses N(7)-methyl-GTP + H2O = N(7)-methyl-GMP + diphosphate + H(+). Nucleoside triphosphate pyrophosphatase that hydrolyzes 7-methyl-GTP (m(7)GTP). May have a dual role in cell division arrest and in preventing the incorporation of modified nucleotides into cellular nucleic acids. The sequence is that of 7-methyl-GTP pyrophosphatase from Xanthomonas axonopodis pv. citri (strain 306).